The primary structure comprises 61 residues: Calprismin (61 aa).

In terms of processing, glycosylated. As to expression, expressed by the calcifying mantle epithelium and incorporated into the shell's calcitic prismatic layer.

This chain is Calprismin, found in Pinna nobilis (Noble pen shell).